The primary structure comprises 471 residues: Putative multidrug resistance protein MdtD (471 aa).

Over 1–11 (MTDLPDSTRWQ) the chain is Periplasmic. Residues 12 to 32 (LWIVAFGFFMQSLDTTIVNTA) traverse the membrane as a helical segment. Residues 33-48 (LPSMAQSLGESPLHMH) are Cytoplasmic-facing. Residues 49–69 (MVIVSYVLTVAVMLPASGWLA) traverse the membrane as a helical segment. Topologically, residues 70-76 (DKVGVRN) are periplasmic. A helical membrane pass occupies residues 77–97 (IFFTAIVLFTLGSLFCALSGT). Topologically, residues 98–101 (LNEL) are cytoplasmic. Residues 102–124 (LLARALQGVGGAMMVPVGRLTVM) traverse the membrane as a helical segment. Residues 125–137 (KIVPREQYMAAMT) are Periplasmic-facing. Residues 138 to 158 (FVTLPGQIGPLLGPALGGLLV) form a helical membrane-spanning segment. At 159-164 (EYASWH) the chain is on the cytoplasmic side. A helical membrane pass occupies residues 165 to 185 (WIFLINIPVGIIGAIATLMLM). Residues 186–196 (PNYTMQTRRFD) lie on the Periplasmic side of the membrane. A helical membrane pass occupies residues 197-217 (LSGFLLLAVGMAVLTLALDGS). The Cytoplasmic portion of the chain corresponds to 218–224 (KGTGFSP). A helical membrane pass occupies residues 225–245 (LAIAGLVAVGVVALVLYLLHA). The Periplasmic portion of the chain corresponds to 246–262 (QNNNRALFSLKLFRTRT). A helical membrane pass occupies residues 263–283 (FSLGLAGSFAGRIGSGMLPFM). The Cytoplasmic segment spans residues 284 to 285 (TP). A helical transmembrane segment spans residues 286–306 (VFLQIGLGFSPFHAGLMMIPM). Over 307-341 (VLGSMGMKRIVVQVVNRFGYRWVLVATTLGLSLVT) the chain is Periplasmic. Residues 342 to 362 (LLFMTTALLGWYYVLPFVLFL) form a helical membrane-spanning segment. Residues 363-395 (QGMVNSTRFSSMNTLTLKDLPDNLASSGNSLLS) are Cytoplasmic-facing. A helical membrane pass occupies residues 396–416 (MIMQLSMSIGVTIAGLLLGLF). The Periplasmic segment spans residues 417–430 (GSQHVSVDSGTTQT). A helical transmembrane segment spans residues 431–451 (VFMYTWLSMAFIIALPAFVFA). Topologically, residues 452–471 (RVPSDTHQNVAISRRKRSAQ) are cytoplasmic.

The protein belongs to the major facilitator superfamily. TCR/Tet family.

The protein localises to the cell inner membrane. This is Putative multidrug resistance protein MdtD from Escherichia coli O81 (strain ED1a).